The chain runs to 380 residues: Cell division protein FtsZ 2 (380 aa).

Residues 47 to 51 (GAGNN), 134 to 136 (GTG), Glu-165, Arg-168, and Asp-211 each bind GTP.

The protein belongs to the FtsZ family. As to quaternary structure, homodimer. Polymerizes to form a dynamic ring structure in a strictly GTP-dependent manner. Interacts directly with several other division proteins.

The protein localises to the cytoplasm. Functionally, essential cell division protein that forms a contractile ring structure (Z ring) at the future cell division site. The regulation of the ring assembly controls the timing and the location of cell division. One of the functions of the FtsZ ring is to recruit other cell division proteins to the septum to produce a new cell wall between the dividing cells. Binds GTP and shows GTPase activity. The chain is Cell division protein FtsZ 2 from Methanocaldococcus jannaschii (strain ATCC 43067 / DSM 2661 / JAL-1 / JCM 10045 / NBRC 100440) (Methanococcus jannaschii).